We begin with the raw amino-acid sequence, 243 residues long: uncharacterized protein (243 aa).

Helical transmembrane passes span 38–58 (AYFL…VGIF), 99–119 (FGIA…FLGY), 143–163 (FYFS…FLVL), and 204–224 (AFAT…LGLF).

It localises to the cell membrane. This is an uncharacterized protein from Mycoplasma pneumoniae (strain ATCC 29342 / M129 / Subtype 1) (Mycoplasmoides pneumoniae).